A 131-amino-acid chain; its full sequence is Small ribosomal subunit protein uS8 (131 aa).

Belongs to the universal ribosomal protein uS8 family. Part of the 30S ribosomal subunit. Contacts proteins S5 and S12.

One of the primary rRNA binding proteins, it binds directly to 16S rRNA central domain where it helps coordinate assembly of the platform of the 30S subunit. This is Small ribosomal subunit protein uS8 from Clostridium novyi (strain NT).